Consider the following 259-residue polypeptide: GTP cyclohydrolase FolE2 (259 aa).

Belongs to the GTP cyclohydrolase IV family.

It carries out the reaction GTP + H2O = 7,8-dihydroneopterin 3'-triphosphate + formate + H(+). Its pathway is cofactor biosynthesis; 7,8-dihydroneopterin triphosphate biosynthesis; 7,8-dihydroneopterin triphosphate from GTP: step 1/1. Its function is as follows. Converts GTP to 7,8-dihydroneopterin triphosphate. The protein is GTP cyclohydrolase FolE2 of Thermosipho africanus (strain TCF52B).